A 137-amino-acid polypeptide reads, in one-letter code: Thioredoxin-like protein R548 (137 aa).

Residues 2–137 (SKDSVETNTI…LEKSIVESSQ (136 aa)) enclose the Thioredoxin domain. Catalysis depends on nucleophile residues C61 and C64. A disulfide bond links C61 and C64.

The protein belongs to the thioredoxin family.

Its function is as follows. Participates in various redox reactions through the reversible oxidation of its active center dithiol to a disulfide and catalyzes dithiol-disulfide exchange reactions. The polypeptide is Thioredoxin-like protein R548 (Acanthamoeba polyphaga mimivirus (APMV)).